A 405-amino-acid polypeptide reads, in one-letter code: Phosphoglycerate kinase (405 aa).

Residues 23–25 (DFN), Arg39, 62–65 (HLGR), Arg121, and Arg154 each bind substrate. ATP-binding positions include Lys207, Gly298, Glu329, and 355–358 (GGDT).

The protein belongs to the phosphoglycerate kinase family. As to quaternary structure, monomer.

It is found in the cytoplasm. It catalyses the reaction (2R)-3-phosphoglycerate + ATP = (2R)-3-phospho-glyceroyl phosphate + ADP. The protein operates within carbohydrate degradation; glycolysis; pyruvate from D-glyceraldehyde 3-phosphate: step 2/5. The polypeptide is Phosphoglycerate kinase (Campylobacter hominis (strain ATCC BAA-381 / DSM 21671 / CCUG 45161 / LMG 19568 / NCTC 13146 / CH001A)).